The following is a 270-amino-acid chain: 3-methyl-2-oxobutanoate hydroxymethyltransferase (270 aa).

Mg(2+)-binding residues include D50 and D89. 3-methyl-2-oxobutanoate-binding positions include 50–51 (DS), D89, and K118. E120 is a Mg(2+) binding site. The active-site Proton acceptor is the E187.

This sequence belongs to the PanB family. Homodecamer; pentamer of dimers. Mg(2+) serves as cofactor.

The protein resides in the cytoplasm. It catalyses the reaction 3-methyl-2-oxobutanoate + (6R)-5,10-methylene-5,6,7,8-tetrahydrofolate + H2O = 2-dehydropantoate + (6S)-5,6,7,8-tetrahydrofolate. It functions in the pathway cofactor biosynthesis; (R)-pantothenate biosynthesis; (R)-pantoate from 3-methyl-2-oxobutanoate: step 1/2. Catalyzes the reversible reaction in which hydroxymethyl group from 5,10-methylenetetrahydrofolate is transferred onto alpha-ketoisovalerate to form ketopantoate. The chain is 3-methyl-2-oxobutanoate hydroxymethyltransferase from Helicobacter pylori (strain P12).